The chain runs to 776 residues: General transcription and DNA repair factor IIH helicase subunit XPD (776 aa).

The Helicase ATP-binding domain maps to 7–277 (DLLVYFPYSY…KKVDEKRLKD (271 aa)). 42–49 (MPSGTGKT) serves as a coordination point for ATP. [4Fe-4S] cluster-binding residues include Cys115, Cys133, Cys150, and Cys184. The short motif at 228-231 (DEAH) is the DEAH box element. The interval 736 to 776 (HVEKQSTSKPPQQQNSAINSTITTSTTTTTTTSTISETHLT) is disordered. Polar residues predominate over residues 742-754 (TSKPPQQQNSAIN). Residues 755-776 (STITTSTTTTTTTSTISETHLT) are compositionally biased toward low complexity.

This sequence belongs to the helicase family. RAD3/XPD subfamily. As to quaternary structure, component of the 7-subunit TFIIH core complex composed of XPB/repB, XPD/repD, gtf2h1, gtf2h2, gtf2h3, gtf2h4 and gtf2h5, which is active in NER. The core complex associates with the 3-subunit CDK-activating kinase (CAK) module composed of cycH/cyclin H, cdk7 and mnat1 to form the 10-subunit holoenzyme (holo-TFIIH) active in transcription. The cofactor is Mg(2+). [4Fe-4S] cluster is required as a cofactor.

It localises to the nucleus. It carries out the reaction Couples ATP hydrolysis with the unwinding of duplex DNA at the replication fork by translocating in the 5'-3' direction. This creates two antiparallel DNA single strands (ssDNA). The leading ssDNA polymer is the template for DNA polymerase III holoenzyme which synthesizes a continuous strand.. It catalyses the reaction ATP + H2O = ADP + phosphate + H(+). Functionally, ATP-dependent 5'-3' DNA helicase, component of the general transcription and DNA repair factor IIH (TFIIH) core complex, which is involved in general and transcription-coupled nucleotide excision repair (NER) of damaged DNA and, when complexed to CDK-activating kinase (CAK), in transcription by RNA polymerase II. In NER, TFIIH acts by opening DNA around the lesion to allow the excision of the damaged oligonucleotide and its replacement by a new DNA fragment. The ATP-dependent helicase activity of XPD/repD is required for DNA opening. In transcription, TFIIH has an essential role in transcription initiation. When the pre-initiation complex (PIC) has been established, TFIIH is required for promoter opening and promoter escape. Phosphorylation of the C-terminal tail (CTD) of the largest subunit of RNA polymerase II by the kinase module CAK controls the initiation of transcription. XPD/repD acts by forming a bridge between CAK and the core-TFIIH complex. The polypeptide is General transcription and DNA repair factor IIH helicase subunit XPD (Dictyostelium discoideum (Social amoeba)).